The primary structure comprises 179 residues: Inner membrane-spanning protein YciB (179 aa).

The next 5 membrane-spanning stretches (helical) occupy residues 22–42 (IYAATAALIVATAIVLIYSWV), 50–70 (MALITFVLVVVFGGLTLFFHN), 76–96 (WKVTVIYALFAGALLVSQWVM), 121–141 (LAWAVFFILCGLANIYIAFWL), and 149–169 (FKVFGLTALTLIFTLLSGVYI).

This sequence belongs to the YciB family.

The protein localises to the cell inner membrane. Functionally, plays a role in cell envelope biogenesis, maintenance of cell envelope integrity and membrane homeostasis. This chain is Inner membrane-spanning protein YciB, found in Escherichia fergusonii (strain ATCC 35469 / DSM 13698 / CCUG 18766 / IAM 14443 / JCM 21226 / LMG 7866 / NBRC 102419 / NCTC 12128 / CDC 0568-73).